Reading from the N-terminus, the 491-residue chain is Ketol-acid reductoisomerase (NADP(+)) (491 aa).

Residues 15–208 (AQLGKCRFMG…GGHRAGVLES (194 aa)) form the KARI N-terminal Rossmann domain. Residues 45–48 (CGAQ), R68, R76, S78, and 108–110 (DKQ) each bind NADP(+). H132 is an active-site residue. NADP(+) is bound at residue G158. KARI C-terminal knotted domains lie at 209-344 (SFVA…TAPQ) and 345-484 (FEGK…MTDM). The Mg(2+) site is built by D217, E221, E389, and E393. S414 lines the substrate pocket.

Belongs to the ketol-acid reductoisomerase family. The cofactor is Mg(2+).

It catalyses the reaction (2R)-2,3-dihydroxy-3-methylbutanoate + NADP(+) = (2S)-2-acetolactate + NADPH + H(+). The enzyme catalyses (2R,3R)-2,3-dihydroxy-3-methylpentanoate + NADP(+) = (S)-2-ethyl-2-hydroxy-3-oxobutanoate + NADPH + H(+). Its pathway is amino-acid biosynthesis; L-isoleucine biosynthesis; L-isoleucine from 2-oxobutanoate: step 2/4. It functions in the pathway amino-acid biosynthesis; L-valine biosynthesis; L-valine from pyruvate: step 2/4. In terms of biological role, involved in the biosynthesis of branched-chain amino acids (BCAA). Catalyzes an alkyl-migration followed by a ketol-acid reduction of (S)-2-acetolactate (S2AL) to yield (R)-2,3-dihydroxy-isovalerate. In the isomerase reaction, S2AL is rearranged via a Mg-dependent methyl migration to produce 3-hydroxy-3-methyl-2-ketobutyrate (HMKB). In the reductase reaction, this 2-ketoacid undergoes a metal-dependent reduction by NADPH to yield (R)-2,3-dihydroxy-isovalerate. The protein is Ketol-acid reductoisomerase (NADP(+)) of Salmonella schwarzengrund (strain CVM19633).